Here is a 179-residue protein sequence, read N- to C-terminus: Large ribosomal subunit protein uL6 (179 aa).

It belongs to the universal ribosomal protein uL6 family. As to quaternary structure, part of the 50S ribosomal subunit.

Functionally, this protein binds to the 23S rRNA, and is important in its secondary structure. It is located near the subunit interface in the base of the L7/L12 stalk, and near the tRNA binding site of the peptidyltransferase center. This is Large ribosomal subunit protein uL6 from Mycolicibacterium vanbaalenii (strain DSM 7251 / JCM 13017 / BCRC 16820 / KCTC 9966 / NRRL B-24157 / PYR-1) (Mycobacterium vanbaalenii).